Here is a 363-residue protein sequence, read N- to C-terminus: Peptide chain release factor 2 (363 aa).

The residue at position 251 (Gln-251) is an N5-methylglutamine.

Belongs to the prokaryotic/mitochondrial release factor family. In terms of processing, methylated by PrmC. Methylation increases the termination efficiency of RF2.

It is found in the cytoplasm. In terms of biological role, peptide chain release factor 2 directs the termination of translation in response to the peptide chain termination codons UGA and UAA. This chain is Peptide chain release factor 2 (prfB), found in Helicobacter pylori (strain J99 / ATCC 700824) (Campylobacter pylori J99).